The primary structure comprises 931 residues: G patch domain-containing protein 1 (931 aa).

Disordered stretches follow at residues 1–41, 73–92, and 169–209; these read MAAR…TVRD, PSTF…LGPE, and QGVG…EDDD. Ala-2 carries the N-acetylalanine modification. Residues Ser-6 and Ser-8 each carry the phosphoserine modification. Positions 152–198 constitute a G-patch domain; the sequence is KLSVGFELLRKMGWKEGQGVGPRVKRRPRRQKPDPGVKIYGCALPPG. Residue Lys-312 forms a Glycyl lysine isopeptide (Lys-Gly) (interchain with G-Cter in SUMO2) linkage. A phosphoserine mark is found at Ser-357 and Ser-477. Disordered regions lie at residues 568-595 and 659-931; these read RFTH…GDKQ and LPTT…LRRQ. The segment covering 582–593 has biased composition (basic and acidic residues); it reads EVPRDQENDVGD. The segment covering 659-668 has biased composition (polar residues); it reads LPTTQASSEK. Positions 669 to 695 are enriched in basic and acidic residues; the sequence is VSQHRGPDKSRKPSRWDTSKHEKKEDS. Ser-715 carries the post-translational modification Phosphoserine. Residues 769-780 are compositionally biased toward acidic residues; it reads SEDEQGDSEDDQ. Over residues 786–802 the composition is skewed to polar residues; that stretch reads ANFQSSQDTDLGETSSV. Over residues 852-888 the composition is skewed to basic residues; that stretch reads EKHKKNKDKHKAKKEHRRKKEKKKKHRKHKHKGKQKN. Low complexity predominate over residues 896 to 905; sequence SSESSDSSDS. The segment covering 922 to 931 has biased composition (basic residues); that stretch reads RLKSLPLRRQ.

This sequence belongs to the GPATCH1 family.

This chain is G patch domain-containing protein 1 (GPATCH1), found in Homo sapiens (Human).